Consider the following 197-residue polypeptide: Recombination protein RecR (197 aa).

A C4-type zinc finger spans residues 57–72; that stretch reads CSVCFGITEEDPCRLC. The region spanning 79–174 is the Toprim domain; it reads TSLCVVEEPQ…RVTRLAHGIP (96 aa).

It belongs to the RecR family.

Functionally, may play a role in DNA repair. It seems to be involved in an RecBC-independent recombinational process of DNA repair. It may act with RecF and RecO. This Geobacter metallireducens (strain ATCC 53774 / DSM 7210 / GS-15) protein is Recombination protein RecR.